The following is a 265-amino-acid chain: MNAPIGVIDSGVGGLTVAKEIIKRLPNETIYYIGDTARCPYGPRTRQEVRNFTWQMAKALEKMNIKMLVIACNTATAVALESLQRNMPFPVLGVINRGARAAVKKTKRHEVVVLATEGTIKSGAYEEALLSLNTSTHIIPLACPTFVPLVESGEYKGQFANNLIAEGLKPLKNEQFDTVILGCTHYPILQKQIEAVVGEDVFVLSSAEETAKDVEEMLAYNGTLADTNAKPAHKFYATGSVPIFRSIAENWLEQGTLDIHRITLK.

Substrate is bound by residues 9 to 10 (DS) and 41 to 42 (YG). The active-site Proton donor/acceptor is Cys72. Position 73–74 (73–74 (NT)) interacts with substrate. Residue Cys183 is the Proton donor/acceptor of the active site. 184–185 (TH) is a binding site for substrate.

Belongs to the aspartate/glutamate racemases family.

The enzyme catalyses L-glutamate = D-glutamate. The protein operates within cell wall biogenesis; peptidoglycan biosynthesis. Its function is as follows. Provides the (R)-glutamate required for cell wall biosynthesis. The polypeptide is Glutamate racemase (Lysinibacillus sphaericus (Bacillus sphaericus)).